The primary structure comprises 83 residues: Sec-independent protein translocase protein TatA (83 aa).

Residues 1–21 form a helical membrane-spanning segment; the sequence is MGGLSLPHLIVLALVVLILFG. The interval 34-83 is disordered; that stretch reads KGIKSFKQGMNDEDSKPVTPPPAQIPPASLQQTPPPAQPAPQPTSTDQAQ. Residues 66 to 75 show a composition bias toward pro residues; the sequence is TPPPAQPAPQ.

It belongs to the TatA/E family. As to quaternary structure, the Tat system comprises two distinct complexes: a TatABC complex, containing multiple copies of TatA, TatB and TatC subunits, and a separate TatA complex, containing only TatA subunits. Substrates initially bind to the TatABC complex, which probably triggers association of the separate TatA complex to form the active translocon.

It localises to the cell inner membrane. Part of the twin-arginine translocation (Tat) system that transports large folded proteins containing a characteristic twin-arginine motif in their signal peptide across membranes. TatA could form the protein-conducting channel of the Tat system. The polypeptide is Sec-independent protein translocase protein TatA (Novosphingobium aromaticivorans (strain ATCC 700278 / DSM 12444 / CCUG 56034 / CIP 105152 / NBRC 16084 / F199)).